A 201-amino-acid polypeptide reads, in one-letter code: Transgelin (201 aa).

An N-acetylalanine modification is found at alanine 2. The 114-residue stretch at 24–137 (EELEERLVEW…RTLMALGSLA (114 aa)) folds into the Calponin-homology (CH) domain. Serine 166 is subject to Phosphoserine. Residue lysine 172 is modified to N6-acetyllysine. One copy of the Calponin-like repeat lies at 175–200 (IGLQMGSNRGASQAGMTGYGRPRQII). Residue serine 181 is modified to Phosphoserine. Arginine 183 carries the omega-N-methylarginine modification.

Belongs to the calponin family.

Its subcellular location is the cytoplasm. Its function is as follows. Actin cross-linking/gelling protein. Involved in calcium interactions and contractile properties of the cell that may contribute to replicative senescence. The protein is Transgelin (TAGLN) of Homo sapiens (Human).